A 257-amino-acid chain; its full sequence is Glycerol-3-phosphate acyltransferase (257 aa).

Helical transmembrane passes span 7–27 (IVMA…LIGS), 66–86 (ILTL…TYII), 104–124 (AILV…PIFF), 140–160 (ITVD…ILLI), 164–184 (MSLS…VPGI), and 203–223 (YVIK…SLLI).

The protein belongs to the PlsY family. As to quaternary structure, probably interacts with PlsX.

The protein resides in the cell membrane. The enzyme catalyses an acyl phosphate + sn-glycerol 3-phosphate = a 1-acyl-sn-glycero-3-phosphate + phosphate. It functions in the pathway lipid metabolism; phospholipid metabolism. In terms of biological role, catalyzes the transfer of an acyl group from acyl-phosphate (acyl-PO(4)) to glycerol-3-phosphate (G3P) to form lysophosphatidic acid (LPA). This enzyme utilizes acyl-phosphate as fatty acyl donor, but not acyl-CoA or acyl-ACP. The protein is Glycerol-3-phosphate acyltransferase of Ureaplasma parvum serovar 3 (strain ATCC 700970).